Reading from the N-terminus, the 268-residue chain is Tryptophan synthase alpha chain (268 aa).

Active-site proton acceptor residues include Glu-49 and Asp-60.

Belongs to the TrpA family. In terms of assembly, tetramer of two alpha and two beta chains.

It carries out the reaction (1S,2R)-1-C-(indol-3-yl)glycerol 3-phosphate + L-serine = D-glyceraldehyde 3-phosphate + L-tryptophan + H2O. It functions in the pathway amino-acid biosynthesis; L-tryptophan biosynthesis; L-tryptophan from chorismate: step 5/5. Functionally, the alpha subunit is responsible for the aldol cleavage of indoleglycerol phosphate to indole and glyceraldehyde 3-phosphate. The sequence is that of Tryptophan synthase alpha chain from Shigella boydii serotype 18 (strain CDC 3083-94 / BS512).